The primary structure comprises 122 residues: Small ribosomal subunit protein uS8c (122 aa).

It belongs to the universal ribosomal protein uS8 family. Part of the 30S ribosomal subunit.

The protein localises to the plastid. The protein resides in the chloroplast. One of the primary rRNA binding proteins, it binds directly to 16S rRNA central domain where it helps coordinate assembly of the platform of the 30S subunit. In Ostreococcus tauri, this protein is Small ribosomal subunit protein uS8c (rps8).